The chain runs to 212 residues: MGKITSIEVQKRNVNRVNVYVDEAFTFACDAELIYKQGIQKDSLIDVEEIKEIVKEDEFIKCKNSALRTVEKTYKTEKELRDKLTEKGFEEDTIKRAIEFLKEYNLLNDEKYAEMYIKDRLRSQGRNKIKYALIRKGVSEDILLDKLSNIDSEDENYTAFKLAEKKYNILKKKESDKYKLSQKLFRFLLSKGYNYDCCNSIVRRLTNNEYME.

Belongs to the RecX family.

Its subcellular location is the cytoplasm. In terms of biological role, modulates RecA activity. In Clostridium perfringens (strain SM101 / Type A), this protein is Regulatory protein RecX.